We begin with the raw amino-acid sequence, 728 residues long: Polyribonucleotide nucleotidyltransferase (728 aa).

Aspartate 513 and aspartate 519 together coordinate Mg(2+). The region spanning 580–640 (PKVKMILIKP…EIVDLTVTYI (61 aa)) is the KH domain. The S1 motif domain maps to 650 to 724 (ENVYEVKILR…ERGQIDLSKK (75 aa)).

It belongs to the polyribonucleotide nucleotidyltransferase family. Mg(2+) is required as a cofactor.

It localises to the cytoplasm. It catalyses the reaction RNA(n+1) + phosphate = RNA(n) + a ribonucleoside 5'-diphosphate. Functionally, involved in mRNA degradation. Catalyzes the phosphorolysis of single-stranded polyribonucleotides processively in the 3'- to 5'-direction. This chain is Polyribonucleotide nucleotidyltransferase, found in Phytoplasma mali (strain AT).